We begin with the raw amino-acid sequence, 305 residues long: Dioxygenase hkm4 (305 aa).

Residues His-140, Asp-142, and His-216 each coordinate Fe cation.

It belongs to the PhyH family. Fe cation is required as a cofactor.

The protein operates within secondary metabolite biosynthesis. Its function is as follows. Dioxygenase; part of the gene cluster that mediates the biosynthesis of hancockiamides, an unusual new family of N-cinnamoylated piperazines. The NRPS hkm10 and the NmrA-like reductase hkm9 are proposed to convert two molecules of L-Phe to the intermediary piperazine called xenocockiamide A. Xenocockiamide A is then converted to hancockiamide D via a series of hydroxylations and O-methylations. The tyrosinase hkm6 may catalyze an aromatic hydroxylation, then the 2-oxoglutarate-dependent Fe(II) dioxygenase hkm4 and the FAD-dependent phenol hydroxylase hkm7 may catalyze consecutive hydroxylations to install 2 more hydroxy groups, and the methyltransferase hkm8 probably catalyzes two methylations using 2 molecules of S-adenosyl-L-methionine (SAM). The NRPS hkm11 activates and transfers trans-cinnamate supplied by the PAL hkm12 to hancockiamide D and produces hancockiamide A. NRPS Hkm11 has the flexibility to tolerate the bulky hancockiamide G as a substrate and the absence of the acetyl-transferase hkm3 opens up the opportunity for hkm11 to introduce a second N-cinnamoyl moiety. The cytochrome P450 monooxygenase hkm5 catalyzes the methylenedioxy bridge formation, converting hancockiamide A into hancockiamide G. Hkm5 can also convert hancockiamide B into hancockiamide C, and hancockiamide D into hancockiamide H. The N-acetyltransferase hkm3 finally transfers an acetyl group to 1-N of piperazine, converting hancockiamide A into hancockiamide B and hancockiamide G into hancockiamide C. The sequence is that of Dioxygenase hkm4 from Aspergillus hancockii.